The sequence spans 204 residues: Cytochrome c biogenesis ATP-binding export protein CcmA (204 aa).

The 202-residue stretch at 3–204 (LSGHGLRCVR…ARELRIGGTT (202 aa)) folds into the ABC transporter domain. 35–42 (GPNGAGKT) provides a ligand contact to ATP.

The protein belongs to the ABC transporter superfamily. CcmA exporter (TC 3.A.1.107) family. In terms of assembly, the complex is composed of two ATP-binding proteins (CcmA) and two transmembrane proteins (CcmB).

The protein localises to the cell inner membrane. The enzyme catalyses heme b(in) + ATP + H2O = heme b(out) + ADP + phosphate + H(+). In terms of biological role, part of the ABC transporter complex CcmAB involved in the biogenesis of c-type cytochromes; once thought to export heme, this seems not to be the case, but its exact role is uncertain. Responsible for energy coupling to the transport system. This is Cytochrome c biogenesis ATP-binding export protein CcmA from Nitrobacter hamburgensis (strain DSM 10229 / NCIMB 13809 / X14).